Consider the following 604-residue polypeptide: Prostaglandin G/H synthase 2 (604 aa).

A signal peptide spans 1–17; sequence MLFRAVLLCAALGLSQA. One can recognise an EGF-like domain in the interval 18 to 55; that stretch reads ANPCCSNPCQNRGECMSTGFDQYKCDCTRTGFYGENCT. 4 disulfide bridges follow: C21/C32, C22/C145, C26/C42, and C44/C54. N-linked (GlcNAc...) asparagine glycosylation is present at N53. A substrate-binding site is contributed by R106. N130 carries N-linked (GlcNAc...) asparagine glycosylation. Catalysis depends on H193, which acts as the Proton acceptor. Y341 contacts substrate. Y371 acts as the For cyclooxygenase activity in catalysis. A heme b-binding site is contributed by H374. The N-linked (GlcNAc...) asparagine glycan is linked to N396. The residue at position 526 (C526) is an S-nitrosocysteine. A disulfide bridge links C555 with C561. Residue S565 is modified to O-acetylserine; by SPHK1. A glycan (N-linked (GlcNAc...) asparagine) is linked at N580.

Belongs to the prostaglandin G/H synthase family. Homodimer. Requires heme b as cofactor. Post-translationally, S-nitrosylation by NOS2 (iNOS) activates enzyme activity. S-nitrosylation may take place on different Cys residues in addition to Cys-526. Acetylated at Ser-565 by SPHK1. During neuroinflammation, acetylation by SPHK1 promotes neuronal secretion of specialized preresolving mediators (SPMs), especially 15-R-lipoxin A4, which results in an increase of phagocytic microglia. As to expression, following colon injury, expressed in the wound bed mesenchyme during the first phase of repair, probably by colonic mesenchymal stem cells (at protein level).

It is found in the microsome membrane. The protein localises to the endoplasmic reticulum membrane. Its subcellular location is the nucleus inner membrane. The protein resides in the nucleus outer membrane. The enzyme catalyses (5Z,8Z,11Z,14Z)-eicosatetraenoate + AH2 + 2 O2 = prostaglandin H2 + A + H2O. It catalyses the reaction (5Z,8Z,11Z,14Z)-eicosatetraenoate + 2 O2 = prostaglandin G2. The catalysed reaction is prostaglandin G2 + AH2 = prostaglandin H2 + A + H2O. It carries out the reaction (5Z,8Z,11Z,14Z,17Z)-eicosapentaenoate + 2 O2 = prostaglandin G3. The enzyme catalyses prostaglandin G3 + AH2 = prostaglandin H3 + A + H2O. It catalyses the reaction (8Z,11Z,14Z)-eicosatrienoate + 2 O2 = prostaglandin G1. The catalysed reaction is prostaglandin G1 + AH2 = prostaglandin H1 + A + H2O. It carries out the reaction 2-(5Z,8Z,11Z,14Z)-eicosatetraenoyl-sn-glycero-3-phosphoethanolamine + 2 O2 = 2-(prostaglandin G2)-sn-glycero-3-phosphoethanolamine. The enzyme catalyses 2-(prostaglandin G2)-sn-glycero-3-phosphoethanolamine + AH2 = 2-(prostaglandin H2)-sn-glycero-3-phosphoethanolamine + A + H2O. It catalyses the reaction 2-(5Z,8Z,11Z,14Z)-eicosatetraenoyl-sn-glycero-3-phosphocholine + 2 O2 = 2-(prostaglandin G2)-sn-glycero-3-phosphocholine. The catalysed reaction is 2-(prostaglandin G2)-sn-glycero-3-phosphocholine + AH2 = 2-(prostaglandin H2)-sn-glycero-3-phosphocholine + A + H2O. It carries out the reaction (15S)-hydroperoxy-(5Z,8Z,11Z,13E)-eicosatetraenoate + AH2 = (15S)-hydroxy-(5Z,8Z,11Z,13E)-eicosatetraenoate + A + H2O. The enzyme catalyses 2-(5Z,8Z,11Z,14Z)-eicosatetraenoyl-sn-glycero-3-phosphocholine + AH2 + O2 = 2-[(15S)-hydroxy-(5Z,8Z,11Z,13E)-eicosatetraenoyl]-sn-glycero-3-phosphocholine + A + H2O. It catalyses the reaction 2-(5Z,8Z,11Z,14Z)-eicosatetraenoyl-sn-glycero-3-phosphocholine + AH2 + O2 = 2-[(15R)-hydroxy-(5Z,8Z,11Z,13E)-eicosatetraenoyl]-sn-glycero-3-phosphocholine + A + H2O. The catalysed reaction is 2-(5Z,8Z,11Z,14Z)-eicosatetraenoyl-sn-glycero-3-phosphocholine + AH2 + O2 = 2-[(11R)-hydroxy-(5Z,8Z,12E,14Z)-eicosatetraenoyl]-sn-glycero-3-phosphocholine + A + H2O. It carries out the reaction (9Z,12Z)-octadecadienoate + AH2 + O2 = 9-hydroxy-(10E,12Z)-octadecadienoate + A + H2O. The enzyme catalyses (9Z,12Z)-octadecadienoate + AH2 + O2 = 13-hydroxy-(9Z,11E)-octadecadienoate + A + H2O. It catalyses the reaction (5Z,8Z,11Z,14Z)-eicosatetraenoate + AH2 + O2 = (15R)-hydroxy-(5Z,8Z,11Z,13E)-eicosatetraenoate + A + H2O. The catalysed reaction is (5Z,8Z,11Z,14Z)-eicosatetraenoate + AH2 + O2 = (11R)-hydroxy-(5Z,8Z,12E,14Z)-eicosatetraenoate + A + H2O. It carries out the reaction (5Z,8Z,11Z,14Z,17Z)-eicosapentaenoate + AH2 + O2 = (11R)-hydroxy-(5Z,8Z,12E,14Z,17Z)-eicosapentaenoate + A + H2O. The enzyme catalyses (5Z,8Z,11Z,14Z,17Z)-eicosapentaenoate + AH2 + O2 = (18S)-hydroxy-(5Z,8Z,11Z,14Z,16E)-eicosapentaenoate + A + H2O. It catalyses the reaction (5Z,8Z,11Z,14Z,17Z)-eicosapentaenoate + AH2 + O2 = (18R)-hydroxy-(5Z,8Z,11Z,14Z,16E)-eicosapentaenoate + A + H2O. The catalysed reaction is (5Z,8Z,11Z,14Z,17Z)-eicosapentaenoate + AH2 + O2 = (15R)-hydroxy-(5Z,8Z,11Z,13E,17Z)-eicosapentaenoate + A + H2O. It carries out the reaction (5Z,8Z,11Z,14Z,17Z)-eicosapentaenoate + AH2 + O2 = (15S)-hydroxy-(5Z,8Z,11Z,13E,17Z)-eicosapentaenoate + A + H2O. The enzyme catalyses (7Z,10Z,13Z,16Z,19Z)-docosapentaenoate + AH2 + O2 = 13R-hydroxy-(7Z,10Z,14E,16Z,19Z)-docosapentaenoate + A + H2O. It catalyses the reaction (4Z,7Z,10Z,13Z,16Z,19Z)-docosahexaenoate + AH2 + O2 = 13-hydroxy-(4Z,7Z,10Z,14E,16Z,19Z)-docosahexaenoate + A + H2O. The catalysed reaction is (5S)-hydroxy-(6E,8Z,11Z,14Z)-eicosatetraenoate + AH2 + O2 = (5S,15R)-dihydroxy-(6E,8Z,11Z,13E)-eicosatetraenoate + A + H2O. It carries out the reaction (4Z,7Z,10Z,13Z,16Z,19Z)-docosahexaenoate + AH2 + O2 = 17R-hydroxy-(4Z,7Z,10Z,13Z,15E,19Z)-docosahexaenoate + A + H2O. The enzyme catalyses (5S)-hydroxy-(6E,8Z,11Z,14Z)-eicosatetraenoate + AH2 + O2 = (5S,15S)-dihydroxy-(6E,8Z,11Z,13E)-eicosatetraenoate + A + H2O. It catalyses the reaction (5S)-hydroxy-(6E,8Z,11Z,14Z)-eicosatetraenoate + AH2 + O2 = (5S,11R)-dihydroxy-(6E,8Z,12E,14Z)-eicosatetraenoate + A + H2O. The catalysed reaction is 2-(5Z,8Z,11Z,14Z-eicosatetraenoyl)-glycerol + 2 O2 = 2-glyceryl-prostaglandin G2. It carries out the reaction 2-glyceryl-prostaglandin G2 + AH2 = 2-glyceryl-prostaglandin H2 + A + H2O. The enzyme catalyses (5Z,8Z,11Z,14Z)-eicosatetraenoate + O2 = (15R)-hydroperoxy-(5Z,8Z,11Z,13E)-eicosatetraenoate. It catalyses the reaction (5Z,8Z,11Z,14Z)-eicosatetraenoate + O2 = 11R-hydroperoxy-(5Z,8Z,12E,14Z)-eicosatetraenoate. The catalysed reaction is (9Z,12Z)-octadecadienoate + AH2 + O2 = (9R)-hydroxy-(10E,12Z)-octadecadienoate + A + H2O. It carries out the reaction (9Z,12Z)-octadecadienoate + AH2 + O2 = (9S)-hydroxy-(10E,12Z)-octadecadienoate + A + H2O. The enzyme catalyses (9Z,12Z)-octadecadienoate + AH2 + O2 = (13S)-hydroxy-(9Z,11E)-octadecadienoate + A + H2O. It catalyses the reaction (9Z,12Z)-octadecadienoate + AH2 + O2 = (13R)-hydroxy-(9Z,11E)-octadecadienoate + A + H2O. The protein operates within lipid metabolism; prostaglandin biosynthesis. Inhibited by the nonsteroidal anti-inflammatory drugs aspirin, naproxen, diclofenac, meclofenamic acid, indomethacin and their analogs. In terms of biological role, dual cyclooxygenase and peroxidase in the biosynthesis pathway of prostanoids, a class of C20 oxylipins mainly derived from arachidonate, with a particular role in the inflammatory response. The cyclooxygenase activity oxygenates arachidonate (AA, C20:4(n-6)) to the hydroperoxy endoperoxide prostaglandin G2 (PGG2), and the peroxidase activity reduces PGG2 to the hydroxy endoperoxide PGH2, the precursor of all 2-series prostaglandins and thromboxanes. This complex transformation is initiated by abstraction of hydrogen at carbon 13 (with S-stereochemistry), followed by insertion of molecular O2 to form the endoperoxide bridge between carbon 9 and 11 that defines prostaglandins. The insertion of a second molecule of O2 (bis-oxygenase activity) yields a hydroperoxy group in PGG2 that is then reduced to PGH2 by two electrons. Similarly catalyzes successive cyclooxygenation and peroxidation of dihomo-gamma-linoleate (DGLA, C20:3(n-6)) and eicosapentaenoate (EPA, C20:5(n-3)) to corresponding PGH1 and PGH3, the precursors of 1- and 3-series prostaglandins. In an alternative pathway of prostanoid biosynthesis, converts 2-arachidonoyl lysophopholipids to prostanoid lysophopholipids, which are then hydrolyzed by intracellular phospholipases to release free prostanoids. Metabolizes 2-arachidonoyl glycerol yielding the glyceryl ester of PGH2, a process that can contribute to pain response. Generates lipid mediators from n-3 and n-6 polyunsaturated fatty acids (PUFAs) via a lipoxygenase-type mechanism. Oxygenates PUFAs to hydroperoxy compounds and then reduces them to corresponding alcohols. Plays a role in the generation of resolution phase interaction products (resolvins) during both sterile and infectious inflammation. Metabolizes docosahexaenoate (DHA, C22:6(n-3)) to 17R-HDHA, a precursor of the D-series resolvins (RvDs). As a component of the biosynthetic pathway of E-series resolvins (RvEs), converts eicosapentaenoate (EPA, C20:5(n-3)) primarily to 18S-HEPE that is further metabolized by ALOX5 and LTA4H to generate 18S-RvE1 and 18S-RvE2. In vascular endothelial cells, converts docosapentaenoate (DPA, C22:5(n-3)) to 13R-HDPA, a precursor for 13-series resolvins (RvTs) shown to activate macrophage phagocytosis during bacterial infection. In activated leukocytes, contributes to oxygenation of hydroxyeicosatetraenoates (HETE) to diHETES (5,15-diHETE and 5,11-diHETE). Can also use linoleate (LA, (9Z,12Z)-octadecadienoate, C18:2(n-6)) as substrate and produce hydroxyoctadecadienoates (HODEs) in a regio- and stereospecific manner, being (9R)-HODE ((9R)-hydroxy-(10E,12Z)-octadecadienoate) and (13S)-HODE ((13S)-hydroxy-(9Z,11E)-octadecadienoate) its major products. During neuroinflammation, plays a role in neuronal secretion of specialized preresolving mediators (SPMs) 15R-lipoxin A4 that regulates phagocytic microglia. The chain is Prostaglandin G/H synthase 2 from Mus musculus (Mouse).